Reading from the N-terminus, the 313-residue chain is Protein FixB (313 aa).

Residue 255 to 283 (LYLAVGISGQIQHMVGANASQTIFAINKD) participates in FAD binding.

It belongs to the ETF alpha-subunit/FixB family. As to quaternary structure, heterodimer of FixA and FixB.

Its pathway is amine and polyamine metabolism; carnitine metabolism. Required for anaerobic carnitine reduction. May bring reductant to CaiA. In Shigella dysenteriae serotype 1 (strain Sd197), this protein is Protein FixB.